A 56-amino-acid polypeptide reads, in one-letter code: Large ribosomal subunit protein bL32 (56 aa).

The span at 1–20 shows a compositional bias: basic residues; it reads MAVPKRRTSRSNTRSRRSQW. Residues 1 to 24 form a disordered region; the sequence is MAVPKRRTSRSNTRSRRSQWKAKV.

Belongs to the bacterial ribosomal protein bL32 family.

The protein is Large ribosomal subunit protein bL32 of Frankia casuarinae (strain DSM 45818 / CECT 9043 / HFP020203 / CcI3).